The chain runs to 521 residues: Medium/long-chain-fatty-acid--[acyl-carrier-protein] ligase MbtM (521 aa).

This sequence belongs to the ATP-dependent AMP-binding enzyme family.

The enzyme catalyses a long-chain fatty acid + holo-[ACP] + ATP = a long-chain fatty acyl-[ACP] + AMP + diphosphate. It carries out the reaction a medium-chain fatty acid + holo-[ACP] + ATP = a medium-chain fatty acyl-[ACP] + AMP + diphosphate. It functions in the pathway siderophore biosynthesis; mycobactin biosynthesis. In terms of biological role, activates lipidic moieties required for mycobactin biosynthesis. Converts medium- to long-chain aliphatic fatty acids into acyl adenylate, which is further transferred on to the phosphopantetheine arm of the carrier protein MbtL. In Mycobacterium tuberculosis (strain CDC 1551 / Oshkosh), this protein is Medium/long-chain-fatty-acid--[acyl-carrier-protein] ligase MbtM (mbtM).